Consider the following 377-residue polypeptide: Nitric oxide reductase FlRd-NAD(+) reductase (377 aa).

The protein belongs to the FAD-dependent oxidoreductase family. The cofactor is FAD.

Its subcellular location is the cytoplasm. It carries out the reaction 2 reduced [nitric oxide reductase rubredoxin domain] + NAD(+) + H(+) = 2 oxidized [nitric oxide reductase rubredoxin domain] + NADH. It participates in nitrogen metabolism; nitric oxide reduction. One of at least two accessory proteins for anaerobic nitric oxide (NO) reductase. Reduces the rubredoxin moiety of NO reductase. This chain is Nitric oxide reductase FlRd-NAD(+) reductase, found in Salmonella schwarzengrund (strain CVM19633).